Here is a 281-residue protein sequence, read N- to C-terminus: Bifunctional protein FolD (281 aa).

NADP(+) is bound by residues 165–167 (GRS) and Ser-190.

It belongs to the tetrahydrofolate dehydrogenase/cyclohydrolase family. Homodimer.

The catalysed reaction is (6R)-5,10-methylene-5,6,7,8-tetrahydrofolate + NADP(+) = (6R)-5,10-methenyltetrahydrofolate + NADPH. It carries out the reaction (6R)-5,10-methenyltetrahydrofolate + H2O = (6R)-10-formyltetrahydrofolate + H(+). Its pathway is one-carbon metabolism; tetrahydrofolate interconversion. Functionally, catalyzes the oxidation of 5,10-methylenetetrahydrofolate to 5,10-methenyltetrahydrofolate and then the hydrolysis of 5,10-methenyltetrahydrofolate to 10-formyltetrahydrofolate. In Polaromonas naphthalenivorans (strain CJ2), this protein is Bifunctional protein FolD.